We begin with the raw amino-acid sequence, 318 residues long: Thymidylate synthase (318 aa).

Residues Arg25 and 180–181 each bind dUMP; that span reads RR. The Nucleophile role is filled by Cys200. Residues 220 to 223, Asn231, and 261 to 263 each bind dUMP; these read RSGD and HIY. Asp223 serves as a coordination point for (6R)-5,10-methylene-5,6,7,8-tetrahydrofolate. Ala317 is a binding site for (6R)-5,10-methylene-5,6,7,8-tetrahydrofolate.

The protein belongs to the thymidylate synthase family. Bacterial-type ThyA subfamily. Homodimer.

The protein localises to the cytoplasm. The catalysed reaction is dUMP + (6R)-5,10-methylene-5,6,7,8-tetrahydrofolate = 7,8-dihydrofolate + dTMP. It participates in pyrimidine metabolism; dTTP biosynthesis. Functionally, catalyzes the reductive methylation of 2'-deoxyuridine-5'-monophosphate (dUMP) to 2'-deoxythymidine-5'-monophosphate (dTMP) while utilizing 5,10-methylenetetrahydrofolate (mTHF) as the methyl donor and reductant in the reaction, yielding dihydrofolate (DHF) as a by-product. This enzymatic reaction provides an intracellular de novo source of dTMP, an essential precursor for DNA biosynthesis. The chain is Thymidylate synthase from Lactobacillus johnsonii (strain CNCM I-12250 / La1 / NCC 533).